The following is a 285-amino-acid chain: Elongation factor Ts (285 aa).

The segment at 82 to 85 (TDFV) is involved in Mg(2+) ion dislocation from EF-Tu.

It belongs to the EF-Ts family.

Its subcellular location is the cytoplasm. Its function is as follows. Associates with the EF-Tu.GDP complex and induces the exchange of GDP to GTP. It remains bound to the aminoacyl-tRNA.EF-Tu.GTP complex up to the GTP hydrolysis stage on the ribosome. The polypeptide is Elongation factor Ts (Sodalis glossinidius (strain morsitans)).